Consider the following 346-residue polypeptide: Lipase chaperone (346 aa).

Residues 10–30 (TIVFGVITSVLLLLLLIYYVF) traverse the membrane as a helical segment.

Belongs to the lipase chaperone family.

The protein resides in the cell inner membrane. In terms of biological role, may be involved in the folding of the extracellular lipase during its passage through the periplasm. This Acinetobacter venetianus (strain ATCC 31012 / DSM 23050 / BCRC 14357 / CCUG 45561 / CIP 110063 / KCTC 2702 / LMG 19082 / RAG-1) protein is Lipase chaperone (lifO).